The primary structure comprises 176 residues: Probable superoxide oxidase CybB (176 aa).

The next 4 membrane-spanning stretches (helical) occupy residues 7-27 (CLQIGIHWLVLLLVIIAWSSI), 44-64 (IHFSCGIAILVLMMTRILIQL), 85-105 (VGHWVIYLLFIALPIIGIAIL), and 137-157 (HLLLANMSYFVIGLHALAALL). His-13 and His-45 together coordinate heme b. Heme b is bound by residues His-137 and His-151.

Belongs to the cytochrome b561 family. Heme b serves as cofactor.

It is found in the cell inner membrane. It catalyses the reaction a ubiquinol + 2 O2 = 2 superoxide + a ubiquinone + 2 H(+). In terms of biological role, B-type di-heme cytochrome. Catalyzes the oxidation of superoxide to molecular oxygen and transfers the extracted electrons to ubiquinone through the two hemes. The chain is Probable superoxide oxidase CybB (cybB) from Yersinia pestis.